Consider the following 213-residue polypeptide: Protein-L-isoaspartate O-methyltransferase (213 aa).

Ser64 is a catalytic residue.

The protein belongs to the methyltransferase superfamily. L-isoaspartyl/D-aspartyl protein methyltransferase family.

It is found in the cytoplasm. The catalysed reaction is [protein]-L-isoaspartate + S-adenosyl-L-methionine = [protein]-L-isoaspartate alpha-methyl ester + S-adenosyl-L-homocysteine. Catalyzes the methyl esterification of L-isoaspartyl residues in peptides and proteins that result from spontaneous decomposition of normal L-aspartyl and L-asparaginyl residues. It plays a role in the repair and/or degradation of damaged proteins. In Flavobacterium johnsoniae (strain ATCC 17061 / DSM 2064 / JCM 8514 / BCRC 14874 / CCUG 350202 / NBRC 14942 / NCIMB 11054 / UW101) (Cytophaga johnsonae), this protein is Protein-L-isoaspartate O-methyltransferase.